We begin with the raw amino-acid sequence, 283 residues long: Pantothenate synthetase (283 aa).

30–37 (MGNLHAGH) contributes to the ATP binding site. Histidine 37 functions as the Proton donor in the catalytic mechanism. Residue glutamine 61 participates in (R)-pantoate binding. A beta-alanine-binding site is contributed by glutamine 61. Position 149–152 (149–152 (GEKD)) interacts with ATP. Glutamine 155 is a (R)-pantoate binding site. Residues valine 178 and 186–189 (LSSR) each bind ATP.

Belongs to the pantothenate synthetase family. As to quaternary structure, homodimer.

It localises to the cytoplasm. The catalysed reaction is (R)-pantoate + beta-alanine + ATP = (R)-pantothenate + AMP + diphosphate + H(+). It participates in cofactor biosynthesis; (R)-pantothenate biosynthesis; (R)-pantothenate from (R)-pantoate and beta-alanine: step 1/1. In terms of biological role, catalyzes the condensation of pantoate with beta-alanine in an ATP-dependent reaction via a pantoyl-adenylate intermediate. This is Pantothenate synthetase from Azotobacter vinelandii (strain DJ / ATCC BAA-1303).